Reading from the N-terminus, the 361-residue chain is Hydroxyproline O-arabinosyltransferase PLENTY (361 aa).

Residues 13–33 traverse the membrane as a helical; Signal-anchor segment; it reads LLMLLMVLGFFFATYNLVSMI.

The protein resides in the golgi apparatus membrane. The catalysed reaction is trans-4-hydroxy-L-prolyl-[protein] + UDP-beta-L-arabinofuranose = O-(beta-L-arabinofuranosyl)-trans-4-hydroxy-L-prolyl-[protein] + UDP + H(+). Its function is as follows. Glycosyltransferase involved in the O-arabinosylation of several proteins including extensins and small signaling peptides. Catalyzes the transfer of the initial L-arabinose to the hydroxyl group of Hyp residues. Probably involved in the arabinosylation of CLAVATA3/ESR-related (CLE) signaling peptides that move from root to shoot, to interact with receptor kinase signaling that regulates nodulation. Involved in long distance nodulation signaling events. Involved in the autoregulation of nodulation (AON), a long distance systemic signaling from root to shoot and back again, which allows legumes to limit the number of root nodules formed based on available nitrogen and previous rhizobial colonization. This is Hydroxyproline O-arabinosyltransferase PLENTY from Lotus japonicus (Lotus corniculatus var. japonicus).